A 300-amino-acid chain; its full sequence is Hydroxyquinol 1,2-dioxygenase (300 aa).

Fe cation-binding residues include Tyr167, Tyr200, His224, and His226.

It belongs to the intradiol ring-cleavage dioxygenase family. Requires Fe(3+) as cofactor.

The catalysed reaction is benzene-1,2,4-triol + O2 = maleylacetate + 2 H(+). The protein operates within aromatic compound metabolism. It participates in xenobiotic degradation. Involved in the degradation of para-nitrophenol (4-NP). Catalyzes the conversion of hydroxyquinol to malelylacetate. This chain is Hydroxyquinol 1,2-dioxygenase (npcC), found in Rhodococcus opacus (Nocardia opaca).